The primary structure comprises 217 residues: MNNPEFWHNKWAANQIGFHLEDVNPLLIKFWEKTEPNYEKSVFVPLCGKSEDLIWLATKHEEVQGVELSQIAVRAFFAEHLYTPTVTQISGQHELYQFDELNIYTGDYFTAPIQPVDTIYDRASLVALPAEIRAQYVERLKQLLKPGGKILLVTLDYDQSEMAGPPFSVPKLEIDQLFAGYKITLLNQDIADDEHPKIAKKGLSRFSEEVYLIESEA.

S-adenosyl-L-methionine-binding residues include Trp-11, Leu-46, Glu-67, and Arg-122.

It belongs to the class I-like SAM-binding methyltransferase superfamily. TPMT family.

The protein localises to the cytoplasm. It carries out the reaction S-adenosyl-L-methionine + a thiopurine = S-adenosyl-L-homocysteine + a thiopurine S-methylether.. The chain is Thiopurine S-methyltransferase from Vibrio atlanticus (strain LGP32) (Vibrio splendidus (strain Mel32)).